A 200-amino-acid chain; its full sequence is 3-isopropylmalate dehydratase small subunit (200 aa).

It belongs to the LeuD family. LeuD type 1 subfamily. Heterodimer of LeuC and LeuD.

The catalysed reaction is (2R,3S)-3-isopropylmalate = (2S)-2-isopropylmalate. Its pathway is amino-acid biosynthesis; L-leucine biosynthesis; L-leucine from 3-methyl-2-oxobutanoate: step 2/4. Functionally, catalyzes the isomerization between 2-isopropylmalate and 3-isopropylmalate, via the formation of 2-isopropylmaleate. This is 3-isopropylmalate dehydratase small subunit from Actinobacillus pleuropneumoniae serotype 5b (strain L20).